We begin with the raw amino-acid sequence, 153 residues long: NAD(P)H-quinone oxidoreductase subunit N (153 aa).

This sequence belongs to the complex I NdhN subunit family. NDH-1 can be composed of about 15 different subunits; different subcomplexes with different compositions have been identified which probably have different functions.

Its subcellular location is the cellular thylakoid membrane. The catalysed reaction is a plastoquinone + NADH + (n+1) H(+)(in) = a plastoquinol + NAD(+) + n H(+)(out). The enzyme catalyses a plastoquinone + NADPH + (n+1) H(+)(in) = a plastoquinol + NADP(+) + n H(+)(out). Functionally, NDH-1 shuttles electrons from an unknown electron donor, via FMN and iron-sulfur (Fe-S) centers, to quinones in the respiratory and/or the photosynthetic chain. The immediate electron acceptor for the enzyme in this species is believed to be plastoquinone. Couples the redox reaction to proton translocation, and thus conserves the redox energy in a proton gradient. Cyanobacterial NDH-1 also plays a role in inorganic carbon-concentration. In Synechococcus sp. (strain CC9311), this protein is NAD(P)H-quinone oxidoreductase subunit N.